We begin with the raw amino-acid sequence, 919 residues long: Probable glucan 1,3-alpha-glucosidase (919 aa).

An N-terminal signal peptide occupies residues Met1 to Ala28. Asp510 (nucleophile) is an active-site residue. Glu513 is an active-site residue. Asp586 functions as the Proton donor in the catalytic mechanism. A glycan (N-linked (GlcNAc...) asparagine) is linked at Asn802.

Belongs to the glycosyl hydrolase 31 family. In terms of assembly, heterodimer of a catalytic alpha subunit and a beta subunit.

The protein resides in the endoplasmic reticulum. The enzyme catalyses N(4)-(alpha-D-Glc-(1-&gt;3)-alpha-D-Man-(1-&gt;2)-alpha-D-Man-(1-&gt;2)-alpha-D-Man-(1-&gt;3)-[alpha-D-Man-(1-&gt;2)-alpha-D-Man-(1-&gt;3)-[alpha-D-Man-(1-&gt;2)-alpha-D-Man-(1-&gt;6)]-alpha-D-Man-(1-&gt;6)]-beta-D-Man-(1-&gt;4)-beta-D-GlcNAc-(1-&gt;4)-beta-D-GlcNAc)-L-asparaginyl-[protein] + H2O = N(4)-(alpha-D-Man-(1-&gt;2)-alpha-D-Man-(1-&gt;2)-alpha-D-Man-(1-&gt;3)-[alpha-D-Man-(1-&gt;2)-alpha-D-Man-(1-&gt;3)-[alpha-D-Man-(1-&gt;2)-alpha-D-Man-(1-&gt;6)]-alpha-D-Man-(1-&gt;6)]-beta-D-Man-(1-&gt;4)-beta-D-GlcNAc-(1-&gt;4)-beta-D-GlcNAc)-L-asparaginyl-[protein] (N-glucan mannose isomer 9A1,2,3B1,2,3) + beta-D-glucose. It catalyses the reaction N(4)-(alpha-D-Glc-(1-&gt;3)-alpha-D-Glc-(1-&gt;3)-alpha-D-Man-(1-&gt;2)-alpha-D-Man-(1-&gt;2)-alpha-D-Man-(1-&gt;3)-[alpha-D-Man-(1-&gt;2)-alpha-D-Man-(1-&gt;3)-[alpha-D-Man-(1-&gt;2)-alpha-D-Man-(1-&gt;6)]-alpha-D-Man-(1-&gt;6)]-beta-D-Man-(1-&gt;4)-beta-D-GlcNAc-(1-&gt;4)-beta-D-GlcNAc)-L-asparaginyl-[protein] + H2O = N(4)-(alpha-D-Glc-(1-&gt;3)-alpha-D-Man-(1-&gt;2)-alpha-D-Man-(1-&gt;2)-alpha-D-Man-(1-&gt;3)-[alpha-D-Man-(1-&gt;2)-alpha-D-Man-(1-&gt;3)-[alpha-D-Man-(1-&gt;2)-alpha-D-Man-(1-&gt;6)]-alpha-D-Man-(1-&gt;6)]-beta-D-Man-(1-&gt;4)-beta-D-GlcNAc-(1-&gt;4)-beta-D-GlcNAc)-L-asparaginyl-[protein] + beta-D-glucose. The protein operates within glycan metabolism; N-glycan metabolism. Its function is as follows. Cleaves sequentially the 2 innermost alpha-1,3-linked glucose residues from the Glc(2)Man(9)GlcNAc(2) oligosaccharide precursor of immature glycoproteins. May be required for defense response elicited by pathogen-associated molecular patterns (PAMPs). In Oryza sativa subsp. japonica (Rice), this protein is Probable glucan 1,3-alpha-glucosidase.